We begin with the raw amino-acid sequence, 198 residues long: Riboflavin synthase (198 aa).

Lumazine-binding repeat units follow at residues 1–95 (MFSG…IGGH) and 96–188 (FVSG…VDTV). 2,4-dihydroxypteridine-binding positions include 4–6 (GII), 46–48 (CLT), 60–65 (DVTEET), 99–101 (GHV), lysine 130, 139–141 (SLT), and 153–158 (SVIPET).

In terms of assembly, homotrimer.

It catalyses the reaction 2 6,7-dimethyl-8-(1-D-ribityl)lumazine + H(+) = 5-amino-6-(D-ribitylamino)uracil + riboflavin. It participates in cofactor biosynthesis; riboflavin biosynthesis; riboflavin from 2-hydroxy-3-oxobutyl phosphate and 5-amino-6-(D-ribitylamino)uracil: step 2/2. Its function is as follows. Catalyzes the dismutation of two molecules of 6,7-dimethyl-8-ribityllumazine, resulting in the formation of riboflavin and 5-amino-6-(D-ribitylamino)uracil. The sequence is that of Riboflavin synthase (ribE) from Chlamydia muridarum (strain MoPn / Nigg).